The chain runs to 426 residues: Serine--tRNA ligase (426 aa).

235–237 (TAE) serves as a coordination point for L-serine. Residues 266–268 (RRE) and V282 contribute to the ATP site. Residue E289 coordinates L-serine. 353 to 356 (EASS) is an ATP binding site. S389 is an L-serine binding site.

This sequence belongs to the class-II aminoacyl-tRNA synthetase family. Type-1 seryl-tRNA synthetase subfamily. Homodimer. The tRNA molecule binds across the dimer.

It is found in the cytoplasm. The catalysed reaction is tRNA(Ser) + L-serine + ATP = L-seryl-tRNA(Ser) + AMP + diphosphate + H(+). It catalyses the reaction tRNA(Sec) + L-serine + ATP = L-seryl-tRNA(Sec) + AMP + diphosphate + H(+). It participates in aminoacyl-tRNA biosynthesis; selenocysteinyl-tRNA(Sec) biosynthesis; L-seryl-tRNA(Sec) from L-serine and tRNA(Sec): step 1/1. In terms of biological role, catalyzes the attachment of serine to tRNA(Ser). Is also able to aminoacylate tRNA(Sec) with serine, to form the misacylated tRNA L-seryl-tRNA(Sec), which will be further converted into selenocysteinyl-tRNA(Sec). The protein is Serine--tRNA ligase of Chlorobium chlorochromatii (strain CaD3).